Reading from the N-terminus, the 89-residue chain is Small ribosomal subunit protein bS20 (89 aa).

This sequence belongs to the bacterial ribosomal protein bS20 family.

Its function is as follows. Binds directly to 16S ribosomal RNA. The protein is Small ribosomal subunit protein bS20 of Hahella chejuensis (strain KCTC 2396).